The primary structure comprises 333 residues: Electron transfer flavoprotein subunit alpha, mitochondrial (333 aa).

A mitochondrion-targeting transit peptide spans Met1–Phe19. The tract at residues Gln20–Leu204 is domain I. Residue Lys59 is modified to N6-acetyllysine; alternate. An N6-succinyllysine; alternate modification is found at Lys59. Lys62 is subject to N6-acetyllysine. N6-acetyllysine; alternate is present on Lys69. Lys69 carries the N6-succinyllysine; alternate modification. Lys75 bears the N6-acetyllysine mark. Residue Lys85 is modified to N6-acetyllysine; alternate. Lys85 carries the N6-succinyllysine; alternate modification. Phosphothreonine is present on Thr93. 2 positions are modified to N6-acetyllysine: Lys101 and Lys139. The residue at position 140 (Ser140) is a Phosphoserine. The residue at position 158 (Lys158) is an N6-acetyllysine; alternate. Lys158 is modified (N6-succinyllysine; alternate). Position 164 is an N6-acetyllysine (Lys164). The residue at position 187 (Lys187) is an N6-succinyllysine. Lys203 carries the post-translational modification N6-acetyllysine; alternate. Lys203 is subject to N6-succinyllysine; alternate. Residues Thr205 to Lys333 form a domain II region. Residue Lys216 is modified to N6-succinyllysine. Residue Arg223 coordinates FAD. N6-acetyllysine; alternate is present on residues Lys226 and Lys232. Residues Lys226 and Lys232 each carry the N6-succinyllysine; alternate modification. Residues Ser248, Val263–Thr266, Ser281–His286, and Asn300 contribute to the FAD site. Lys301 carries the N6-succinyllysine modification. Asp318 to Leu319 is an FAD binding site.

This sequence belongs to the ETF alpha-subunit/FixB family. Heterodimer composed of ETFA and ETFB. Identified in a complex that contains ETFA, ETFB and ETFRF1. Interaction with ETFRF1 promotes dissociation of the bound FAD and loss of electron transfer activity. Interacts with TASOR. FAD serves as cofactor. The N-terminus is blocked.

The protein resides in the mitochondrion matrix. Its function is as follows. Heterodimeric electron transfer flavoprotein that accepts electrons from several mitochondrial dehydrogenases, including acyl-CoA dehydrogenases, glutaryl-CoA and sarcosine dehydrogenase. It transfers the electrons to the main mitochondrial respiratory chain via ETF-ubiquinone oxidoreductase (ETF dehydrogenase). Required for normal mitochondrial fatty acid oxidation and normal amino acid metabolism. The sequence is that of Electron transfer flavoprotein subunit alpha, mitochondrial (ETFA) from Homo sapiens (Human).